Reading from the N-terminus, the 117-residue chain is Large ribosomal subunit protein bL20c (117 aa).

The protein belongs to the bacterial ribosomal protein bL20 family.

Its subcellular location is the plastid. It localises to the chloroplast. Its function is as follows. Binds directly to 23S ribosomal RNA and is necessary for the in vitro assembly process of the 50S ribosomal subunit. It is not involved in the protein synthesizing functions of that subunit. This is Large ribosomal subunit protein bL20c from Morus indica (Mulberry).